A 158-amino-acid polypeptide reads, in one-letter code: Transcription elongation factor GreA (158 aa).

The protein belongs to the GreA/GreB family.

In terms of biological role, necessary for efficient RNA polymerase transcription elongation past template-encoded arresting sites. The arresting sites in DNA have the property of trapping a certain fraction of elongating RNA polymerases that pass through, resulting in locked ternary complexes. Cleavage of the nascent transcript by cleavage factors such as GreA or GreB allows the resumption of elongation from the new 3'terminus. GreA releases sequences of 2 to 3 nucleotides. The polypeptide is Transcription elongation factor GreA (Ruthia magnifica subsp. Calyptogena magnifica).